Reading from the N-terminus, the 239-residue chain is MGKAIFITGTGTEIGKTVATSFLAFAFQKMGLNTKIFKPIQTGLAEDGVSFADQYWYEKVVGLAQSEGLYYMEPAVSPHLAATLTNTTIDPALIVEKIEQWKRQYDIVLVEGAGGLAVPLIEKEQGFYMTNDLIREYNIPIIIVSLAGLGAIHHTVTTVSYAQQQGIRILGLIFNQFNAESIIHVNNIETIKKMLDLPVIATLPSLAKVTKHTMMALAERWLENNEQKQLLQEVLSVAI.

Residue 13-18 (EIGKTV) participates in ATP binding. Thr17 is a Mg(2+) binding site. The active site involves Lys38. Thr42 is a binding site for substrate. Mg(2+) is bound by residues Lys59 and Glu111. ATP is bound by residues 111-114 (EGAG), 175-176 (NQ), and 204-206 (PSL).

It belongs to the dethiobiotin synthetase family. Homodimer. The cofactor is Mg(2+).

The protein localises to the cytoplasm. The enzyme catalyses (7R,8S)-7,8-diammoniononanoate + CO2 + ATP = (4R,5S)-dethiobiotin + ADP + phosphate + 3 H(+). It participates in cofactor biosynthesis; biotin biosynthesis; biotin from 7,8-diaminononanoate: step 1/2. Functionally, catalyzes a mechanistically unusual reaction, the ATP-dependent insertion of CO2 between the N7 and N8 nitrogen atoms of 7,8-diaminopelargonic acid (DAPA, also called 7,8-diammoniononanoate) to form a ureido ring. This is ATP-dependent dethiobiotin synthetase BioD from Geobacillus sp. (strain WCH70).